The sequence spans 350 residues: Ketol-acid reductoisomerase (NADP(+)) (350 aa).

The region spanning 3–183 is the KARI N-terminal Rossmann domain; it reads AQIWYEDDGD…GALRAGAIKT (181 aa). NADP(+)-binding positions include 26–29, R49, S52, S54, and 84–87; these read YGSQ and DQYQ. H109 is a catalytic residue. Residue G135 coordinates NADP(+). A KARI C-terminal knotted domain is found at 184 to 327; sequence TFKEETETDL…PKLRAMFSWN (144 aa). Residues D192, E196, E228, and E232 each coordinate Mg(2+). S253 serves as a coordination point for substrate.

Belongs to the ketol-acid reductoisomerase family. The cofactor is Mg(2+).

The enzyme catalyses (2R)-2,3-dihydroxy-3-methylbutanoate + NADP(+) = (2S)-2-acetolactate + NADPH + H(+). The catalysed reaction is (2R,3R)-2,3-dihydroxy-3-methylpentanoate + NADP(+) = (S)-2-ethyl-2-hydroxy-3-oxobutanoate + NADPH + H(+). The protein operates within amino-acid biosynthesis; L-isoleucine biosynthesis; L-isoleucine from 2-oxobutanoate: step 2/4. It participates in amino-acid biosynthesis; L-valine biosynthesis; L-valine from pyruvate: step 2/4. Involved in the biosynthesis of branched-chain amino acids (BCAA). Catalyzes an alkyl-migration followed by a ketol-acid reduction of (S)-2-acetolactate (S2AL) to yield (R)-2,3-dihydroxy-isovalerate. In the isomerase reaction, S2AL is rearranged via a Mg-dependent methyl migration to produce 3-hydroxy-3-methyl-2-ketobutyrate (HMKB). In the reductase reaction, this 2-ketoacid undergoes a metal-dependent reduction by NADPH to yield (R)-2,3-dihydroxy-isovalerate. The protein is Ketol-acid reductoisomerase (NADP(+)) of Bifidobacterium animalis subsp. lactis (strain AD011).